A 101-amino-acid chain; its full sequence is Small ribosomal subunit protein uS14 (101 aa).

Basic and acidic residues predominate over residues 1 to 10 (MAKKSAIEKN). Residues 1 to 23 (MAKKSAIEKNNRRKKMTKNAAPK) form a disordered region. Residues 11-23 (NRRKKMTKNAAPK) are compositionally biased toward basic residues.

It belongs to the universal ribosomal protein uS14 family. Part of the 30S ribosomal subunit. Contacts proteins S3 and S10.

Binds 16S rRNA, required for the assembly of 30S particles and may also be responsible for determining the conformation of the 16S rRNA at the A site. This chain is Small ribosomal subunit protein uS14, found in Rhodopseudomonas palustris (strain TIE-1).